A 455-amino-acid polypeptide reads, in one-letter code: Protein FAM124B (455 aa).

A Phosphoserine modification is found at Ser49. The tract at residues 270-322 (TSVSAKRTSEPRSQRNQGKRSQGHSLELPEPSGSPTSDRCAGTSWKSPGRSFQ) is disordered. A compositionally biased stretch (polar residues) spans 313 to 322 (SWKSPGRSFQ).

Belongs to the FAM124 family. In terms of assembly, interacts with CHD7 and CHD8.

Its subcellular location is the nucleus. The chain is Protein FAM124B (FAM124B) from Homo sapiens (Human).